Consider the following 248-residue polypeptide: Phycocyanobilin:ferredoxin oxidoreductase (248 aa).

Belongs to the HY2 family.

It catalyses the reaction (2R,3Z)-phycocyanobilin + 4 oxidized [2Fe-2S]-[ferredoxin] = biliverdin IXalpha + 4 reduced [2Fe-2S]-[ferredoxin] + 4 H(+). Its function is as follows. Catalyzes the four-electron reduction of biliverdin IX-alpha (2-electron reduction at both the A and D rings); the reaction proceeds via an isolatable 2-electron intermediate, 181,182-dihydrobiliverdin. In Synechococcus sp. (strain ATCC 27144 / PCC 6301 / SAUG 1402/1) (Anacystis nidulans), this protein is Phycocyanobilin:ferredoxin oxidoreductase.